The chain runs to 88 residues: Small ribosomal subunit protein bS16 (88 aa).

The protein belongs to the bacterial ribosomal protein bS16 family.

In Mycoplasma pneumoniae (strain ATCC 29342 / M129 / Subtype 1) (Mycoplasmoides pneumoniae), this protein is Small ribosomal subunit protein bS16.